The sequence spans 216 residues: Probable transaldolase (216 aa).

Catalysis depends on Lys83, which acts as the Schiff-base intermediate with substrate.

This sequence belongs to the transaldolase family. Type 3B subfamily.

The protein resides in the cytoplasm. It catalyses the reaction D-sedoheptulose 7-phosphate + D-glyceraldehyde 3-phosphate = D-erythrose 4-phosphate + beta-D-fructose 6-phosphate. Its pathway is carbohydrate degradation; pentose phosphate pathway; D-glyceraldehyde 3-phosphate and beta-D-fructose 6-phosphate from D-ribose 5-phosphate and D-xylulose 5-phosphate (non-oxidative stage): step 2/3. In terms of biological role, transaldolase is important for the balance of metabolites in the pentose-phosphate pathway. The chain is Probable transaldolase from Desulforamulus reducens (strain ATCC BAA-1160 / DSM 100696 / MI-1) (Desulfotomaculum reducens).